The following is a 197-amino-acid chain: Putative peptidyl-prolyl cis-trans isomerase (197 aa).

In terms of domain architecture, PPIase cyclophilin-type spans 14–195 (GEIKVVMHTN…HDVVIESIDV (182 aa)).

The protein belongs to the cyclophilin-type PPIase family.

The catalysed reaction is [protein]-peptidylproline (omega=180) = [protein]-peptidylproline (omega=0). PPIases accelerate the folding of proteins. It catalyzes the cis-trans isomerization of proline imidic peptide bonds in oligopeptides. The sequence is that of Putative peptidyl-prolyl cis-trans isomerase from Staphylococcus aureus (strain COL).